The primary structure comprises 276 residues: Large ribosomal subunit protein uL2 (276 aa).

Residues 226 to 276 are disordered; sequence MNSVDHPHGGGEGKTSGGRHPVSPWGTPTKGYKTRSNKRTDKLILRHRNKG.

This sequence belongs to the universal ribosomal protein uL2 family. Part of the 50S ribosomal subunit. Forms a bridge to the 30S subunit in the 70S ribosome.

Functionally, one of the primary rRNA binding proteins. Required for association of the 30S and 50S subunits to form the 70S ribosome, for tRNA binding and peptide bond formation. It has been suggested to have peptidyltransferase activity; this is somewhat controversial. Makes several contacts with the 16S rRNA in the 70S ribosome. This is Large ribosomal subunit protein uL2 from Vesicomyosocius okutanii subsp. Calyptogena okutanii (strain HA).